We begin with the raw amino-acid sequence, 274 residues long: Nitrogenase iron protein (274 aa).

8–15 (GKGGIGKS) is a binding site for ATP. Cys-94 is a binding site for [4Fe-4S] cluster. ADP-ribosylarginine; by dinitrogenase reductase ADP-ribosyltransferase is present on Arg-97. [4Fe-4S] cluster is bound at residue Cys-131.

It belongs to the NifH/BchL/ChlL family. In terms of assembly, homodimer. [4Fe-4S] cluster serves as cofactor. In terms of processing, the reversible ADP-ribosylation of Arg-97 inactivates the nitrogenase reductase and regulates nitrogenase activity.

The catalysed reaction is N2 + 8 reduced [2Fe-2S]-[ferredoxin] + 16 ATP + 16 H2O = H2 + 8 oxidized [2Fe-2S]-[ferredoxin] + 2 NH4(+) + 16 ADP + 16 phosphate + 6 H(+). Functionally, the key enzymatic reactions in nitrogen fixation are catalyzed by the nitrogenase complex, which has 2 components: the iron protein and the molybdenum-iron protein. The chain is Nitrogenase iron protein from Pelodictyon phaeoclathratiforme (strain DSM 5477 / BU-1).